A 606-amino-acid chain; its full sequence is WD repeat-containing protein 1 (606 aa).

13 WD repeats span residues 4 to 45, 48 to 87, 93 to 135, 138 to 176, 180 to 218, 224 to 263, 270 to 306, 311 to 351, 358 to 408, 432 to 474, 480 to 518, 523 to 561, and 566 to 604; these read EIKK…LRNI, PAIADIYTEHAHQVVVAKYAPSGFYIASGDISGKLRIWDT, LLKY…LWDT, SVGEITGHNKVINSVDIKQTRPYRLATGSDDNCAAFFEG, KFKFTIGDHSRFVNCVRFSPDGNRFATASADGQIFIYDG, VCALGESKAHDGGIYAISWSPDSTHLLSASGDKTSKIWDV, STFPMGSNVLDQQLGCLWQKDHLLSISLSGYINYLDK, KPLR…YWDS, SFSG…KLDV, LKDQ…VYSI, KDEGKLLEAKGPVTDVAYSHDGAFLAVCDASKVVTVFSV, SENNVFYGHHAKIVCLAWSPDNEHFASGGMDMMVYVWTL, and TKVKIQDAHRLHHVSSLAWLDEHTLVTTSHDASVKEWTI. Residues Lys28, Lys81, Lys95, and Lys115 each carry the N6-acetyllysine modification. Position 238 is a phosphotyrosine (Tyr238). Lys480 carries the post-translational modification N6-acetyllysine.

The protein belongs to the WD repeat AIP1 family.

The protein localises to the cytoplasm. It is found in the cytoskeleton. Its subcellular location is the cell projection. It localises to the podosome. Its function is as follows. Induces disassembly of actin filaments in conjunction with ADF/cofilin family proteins. Enhances cofilin-mediated actin severing. Involved in cytokinesis. Involved in chemotactic cell migration by restricting lamellipodial membrane protrusions. Involved in myocardium sarcomere organization. Required for cardiomyocyte growth at the postnatal and maintenance at the adult stage. Involved in neutrophil actin dynamics and migration. Involved in megakaryocyte maturation and platelet shedding. Required for the establishment of planar cell polarity (PCP) during follicular epithelium development and for cell shape changes during PCP; the function seems to implicate cooperation with CFL1 and/or DSTN/ADF. Involved in the generation/maintenance of cortical tension. Involved in assembly and maintenance of epithelial apical cell junctions and plays a role in the organization of the perijunctional actomyosin belt. This Mus musculus (Mouse) protein is WD repeat-containing protein 1 (Wdr1).